Consider the following 377-residue polypeptide: Flap endonuclease 1 (377 aa).

Positions 1–105 (MGIKGLNAII…HELSKRTARR (105 aa)) are N-domain. Residue Asp34 participates in Mg(2+) binding. Residues Arg47 and Arg71 each contribute to the DNA site. Asp87 contributes to the Mg(2+) binding site. The tract at residues 99-119 (SKRTARREETEKKLQEATDQA) is disordered. The segment at 120–251 (EKMKQERRLV…VTALKLIKEY (132 aa)) is I-domain. Mg(2+) is bound by residues Glu156, Glu158, Asp177, and Asp179. Glu156 serves as a coordination point for DNA. 2 residues coordinate DNA: Gly229 and Asp231. Asp231 is a Mg(2+) binding site. The interaction with PCNA stretch occupies residues 338–346 (VQGRLDGFF).

This sequence belongs to the XPG/RAD2 endonuclease family. FEN1 subfamily. In terms of assembly, interacts with PCNA. Three molecules of FEN1 bind to one PCNA trimer with each molecule binding to one PCNA monomer. PCNA stimulates the nuclease activity without altering cleavage specificity. Requires Mg(2+) as cofactor. In terms of processing, phosphorylated. Phosphorylation upon DNA damage induces relocalization to the nuclear plasma.

It localises to the nucleus. Its subcellular location is the nucleolus. The protein localises to the nucleoplasm. The protein resides in the mitochondrion. In terms of biological role, structure-specific nuclease with 5'-flap endonuclease and 5'-3' exonuclease activities involved in DNA replication and repair. During DNA replication, cleaves the 5'-overhanging flap structure that is generated by displacement synthesis when DNA polymerase encounters the 5'-end of a downstream Okazaki fragment. It enters the flap from the 5'-end and then tracks to cleave the flap base, leaving a nick for ligation. Also involved in the long patch base excision repair (LP-BER) pathway, by cleaving within the apurinic/apyrimidinic (AP) site-terminated flap. Acts as a genome stabilization factor that prevents flaps from equilibrating into structures that lead to duplications and deletions. Also possesses 5'-3' exonuclease activity on nicked or gapped double-stranded DNA, and exhibits RNase H activity. Also involved in replication and repair of rDNA and in repairing mitochondrial DNA. The protein is Flap endonuclease 1 of Vanderwaltozyma polyspora (strain ATCC 22028 / DSM 70294 / BCRC 21397 / CBS 2163 / NBRC 10782 / NRRL Y-8283 / UCD 57-17) (Kluyveromyces polysporus).